Here is a 98-residue protein sequence, read N- to C-terminus: Large ribosomal subunit protein uL23 (98 aa).

The protein belongs to the universal ribosomal protein uL23 family. As to quaternary structure, part of the 50S ribosomal subunit. Contacts protein L29, and trigger factor when it is bound to the ribosome.

Its function is as follows. One of the early assembly proteins it binds 23S rRNA. One of the proteins that surrounds the polypeptide exit tunnel on the outside of the ribosome. Forms the main docking site for trigger factor binding to the ribosome. In Nitrobacter hamburgensis (strain DSM 10229 / NCIMB 13809 / X14), this protein is Large ribosomal subunit protein uL23.